The chain runs to 431 residues: Glutamate-1-semialdehyde 2,1-aminomutase (431 aa).

At K269 the chain carries N6-(pyridoxal phosphate)lysine.

The protein belongs to the class-III pyridoxal-phosphate-dependent aminotransferase family. HemL subfamily. As to quaternary structure, homodimer. Pyridoxal 5'-phosphate is required as a cofactor.

The protein localises to the cytoplasm. The enzyme catalyses (S)-4-amino-5-oxopentanoate = 5-aminolevulinate. It functions in the pathway porphyrin-containing compound metabolism; protoporphyrin-IX biosynthesis; 5-aminolevulinate from L-glutamyl-tRNA(Glu): step 2/2. The chain is Glutamate-1-semialdehyde 2,1-aminomutase from Francisella tularensis subsp. tularensis (strain WY96-3418).